Here is a 542-residue protein sequence, read N- to C-terminus: Beta-amylase 2, chloroplastic (542 aa).

The transit peptide at 1–55 (MAIRLNHSVIPVSVKLGAPTRVSARSSLPFSVGDWRGVSTFSGARPLVLAKVKLR) directs the protein to the chloroplast. D136, H176, and D184 together coordinate substrate. Catalysis depends on E269, which acts as the Proton donor. Substrate contacts are provided by K377, H382, and T424. E465 functions as the Proton acceptor in the catalytic mechanism. Substrate is bound by residues 466-467 (NA) and R501.

Belongs to the glycosyl hydrolase 14 family.

The protein resides in the plastid. Its subcellular location is the chloroplast. It carries out the reaction Hydrolysis of (1-&gt;4)-alpha-D-glucosidic linkages in polysaccharides so as to remove successive maltose units from the non-reducing ends of the chains.. Its activity is regulated as follows. Redox regulation; active in reducing conditions, inactive in oxidizing conditions. Functionally, low beta-amylase activity. Interacts poorly with starch or other alpha-1,4-glucan. The sequence is that of Beta-amylase 2, chloroplastic (BAM2) from Arabidopsis thaliana (Mouse-ear cress).